The chain runs to 235 residues: Probable transcriptional regulatory protein CJJ81176_1187 (235 aa).

This sequence belongs to the TACO1 family.

The protein resides in the cytoplasm. This chain is Probable transcriptional regulatory protein CJJ81176_1187, found in Campylobacter jejuni subsp. jejuni serotype O:23/36 (strain 81-176).